Consider the following 450-residue polypeptide: 3-phosphoshikimate 1-carboxyvinyltransferase (450 aa).

The 3-phosphoshikimate site is built by Lys28, Ser29, and Arg33. Residue Lys28 participates in phosphoenolpyruvate binding. Residues Gly100 and Arg128 each coordinate phosphoenolpyruvate. 3-phosphoshikimate is bound by residues Ser173, Gln175, Asp326, and Lys353. Gln175 lines the phosphoenolpyruvate pocket. The Proton acceptor role is filled by Asp326. Phosphoenolpyruvate contacts are provided by Arg357 and Arg402.

The protein belongs to the EPSP synthase family. In terms of assembly, monomer.

It is found in the cytoplasm. The enzyme catalyses 3-phosphoshikimate + phosphoenolpyruvate = 5-O-(1-carboxyvinyl)-3-phosphoshikimate + phosphate. Its pathway is metabolic intermediate biosynthesis; chorismate biosynthesis; chorismate from D-erythrose 4-phosphate and phosphoenolpyruvate: step 6/7. Catalyzes the transfer of the enolpyruvyl moiety of phosphoenolpyruvate (PEP) to the 5-hydroxyl of shikimate-3-phosphate (S3P) to produce enolpyruvyl shikimate-3-phosphate and inorganic phosphate. In Brucella abortus (strain S19), this protein is 3-phosphoshikimate 1-carboxyvinyltransferase.